The sequence spans 2003 residues: Histone acetyltransferase KAT6A (2003 aa).

The SAMD1-like winged helix (WH) domain maps to 1 to 77 (MVKLANPLYT…LNSYKDPDNP (77 aa)). The segment at 1 to 144 (MVKLANPLYT…CGGSAAPGFH (144 aa)) is required for activation of RUNX1-1. Residues 52 to 166 (ELSVKDGTIL…HGRLLKDGPL (115 aa)) form a required for nuclear localization region. In terms of domain architecture, H15 spans 95–171 (QSVDWNKLLK…KDGPLYRLNT (77 aa)). The tract at residues 144-663 (HQQLRLAIKR…RKGYGRFLID (520 aa)) is interaction with PML. The residue at position 172 (lysine 172) is an N6-acetyllysine. 2 consecutive PHD-type zinc fingers follow at residues 206–265 (IPIC…CKTC) and 262–313 (CKTC…CRPR). The interval 312 to 663 (PRKKGRKLLQ…RKGYGRFLID (352 aa)) is interaction with RUNX1-1. Residues 336-377 (GRPKNRLKKQNTVSKGPFSKVRTGPGRGRKRKITVSSQSASS) form a disordered region. 2 positions are modified to N6-acetyllysine: lysine 350 and lysine 355. Phosphothreonine; by PKB/AKT1 is present on threonine 369. A Phosphoserine modification is found at serine 419. Positions 439-466 (RKKGNRKSSTSDWPTDNQDGWESKQENE) are disordered. Over residues 445–458 (KSSTSDWPTDNQDG) the composition is skewed to polar residues. Serine 472 carries the post-translational modification Phosphoserine. A catalytic region spans residues 487–777 (IQEQALQKVG…VDPECLRWTP (291 aa)). Residues 503-777 (PQVRCPSVIE…VDPECLRWTP (275 aa)) enclose the MYST-type HAT domain. The mediates interaction with BRPF1, required for histone H3 acetyltransferase activity stretch occupies residues 506–809 (RCPSVIEFGK…EPQGQERELE (304 aa)). The C2HC MYST-type zinc-finger motif lies at 536-561 (LYLCEFCLKYMKSRTILQQHMKKCGW). Lysine 603 carries the N6-acetyllysine; by autocatalysis modification. Acetyl-CoA contacts are provided by residues 644–648 (SCIMI) and 653–659 (QRKGYGR). Catalysis depends on glutamate 679, which acts as the Proton donor/acceptor. Serine 683 lines the acetyl-CoA pocket. The tract at residues 784–939 (VVSEDEDEEA…DGKPDIPKGR (156 aa)) is disordered. A Phosphoserine modification is found at serine 786. The segment covering 786–798 (SEDEDEEADEGEK) has biased composition (acidic residues). Residues 799–841 (EEPQGQERELETRVKVGKSVSREKKDQESSSLIETDKKPEVKE) are compositionally biased toward basic and acidic residues. An N6-acetyllysine mark is found at lysine 813 and lysine 816. Residue lysine 836 forms a Glycyl lysine isopeptide (Lys-Gly) (interchain with G-Cter in SUMO2) linkage. The segment covering 866–875 (RRGRCGRKNR) has biased composition (basic residues). Basic and acidic residues predominate over residues 876–890 (KTQERFGDKDSKMLV). Tyrosine 901 is modified (phosphotyrosine). The segment covering 904 to 917 (CEEKSETSQERFTE) has biased composition (basic and acidic residues). Serine 941 and serine 954 each carry phosphoserine. Positions 983–1083 (GFSESSEEEE…EEEESELFPR (101 aa)) are disordered. Position 1007 is an N6-acetyllysine (lysine 1007). The span at 1009–1030 (TLKRKKPILHRRRRVRKRKHHN) shows a compositional bias: basic residues. Residues 1031–1042 (SSVVTETISETT) show a composition bias toward low complexity. 2 stretches are compositionally biased toward acidic residues: residues 1043-1053 (EVLDEPFEDSD) and 1065-1079 (FEMEEEEEEEEEESE). 3 positions are modified to phosphoserine: serine 1090, serine 1091, and serine 1115. Disordered regions lie at residues 1096–1174 (RCQS…RKPG), 1197–1438 (IKPG…GAYQ), 1455–1533 (HTDE…PSVS), 1546–1568 (DLGSIESTTENYENPSSYDSTMG), and 1631–1707 (TCVV…CSMN). Residues 1107–1120 (EEEEEEEESDDADD) show a composition bias toward acidic residues. Polar residues predominate over residues 1136-1147 (NSASLEPDTSTP). Residues 1148–1174 (MKKKKGWPKGKSRKPIHWKKRPGRKPG) are compositionally biased toward basic residues. Residues 1204 to 1229 (RTQENEEIVEVKEDLLEERKEEMHTE) show a composition bias toward basic and acidic residues. Composition is skewed to acidic residues over residues 1230-1241 (PDEEAEEEEDTT) and 1282-1299 (EEPQELEEQEQEEEDEVT). Residues 1317 to 1334 (HLDSLKTKEPEEQPARED) are compositionally biased toward basic and acidic residues. Lysine 1336 is covalently cross-linked (Glycyl lysine isopeptide (Lys-Gly) (interchain with G-Cter in SUMO2)). 2 stretches are compositionally biased toward basic and acidic residues: residues 1352–1361 (DSRENTKDKD) and 1393–1414 (DSNTKEELIELKEEEEIPHSEL). Residues 1473-1490 (HNSPISSIPSHPSQSVRS) are compositionally biased toward low complexity. Polar residues-rich tracts occupy residues 1502–1523 (GYTQISPEQGSLSAPSMQNMET) and 1550–1568 (IESTTENYENPSSYDSTMG). The interval 1511-1636 (GSLSAPSMQN…KSPQTCVVER (126 aa)) is interaction with RUNX1-2. The interval 1511–1740 (GSLSAPSMQN…YERIPGDFGA (230 aa)) is interaction with PML. Composition is skewed to pro residues over residues 1640–1673 (NQQPPPPPPPPPPPQQPQPPPQQQAAPQPPPPQP) and 1682–1698 (QPPPPQQQPQPPPPQQQ). Residues 1912–1947 (SMNMNTLNAMNSYRMTQPMMNSSYHSNPAYMNQTAQ) are required for activation of RUNX1-2.

This sequence belongs to the MYST (SAS/MOZ) family. In terms of assembly, component of the MOZ/MORF complex composed at least of ING5, KAT6A, KAT6B, MEAF6 and one of BRPF1, BRD1/BRPF2 and BRPF3. Interacts with RUNX2. Interacts with RUNX1; phosphorylation of RUNX1 enhances the interaction. Interacts with p53/TP53. Interacts with PML and this interaction positively regulates its acetylation activity towards p53/TP53. Post-translationally, autoacetylated. Autoacetylation at Lys-603 is required for proper function. Phosphorylation at Thr-369 by PKB/AKT1 inhibits its interaction with PML and negatively regulates its acetylation activity towards p53/TP53.

Its subcellular location is the nucleus. It localises to the nucleolus. It is found in the nucleoplasm. The protein localises to the PML body. It catalyses the reaction L-lysyl-[protein] + acetyl-CoA = N(6)-acetyl-L-lysyl-[protein] + CoA + H(+). Its function is as follows. Histone acetyltransferase that acetylates lysine residues in histone H3 and histone H4 (in vitro). Component of the MOZ/MORF complex which has a histone H3 acetyltransferase activity. May act as a transcriptional coactivator for RUNX1 and RUNX2. Acetylates p53/TP53 at 'Lys-120' and 'Lys-382' and controls its transcriptional activity via association with PML. The sequence is that of Histone acetyltransferase KAT6A (Kat6a) from Mus musculus (Mouse).